Here is an 87-residue protein sequence, read N- to C-terminus: Small ribosomal subunit protein bS20 (87 aa).

The segment covering methionine 1 to isoleucine 15 has biased composition (basic residues). The tract at residues methionine 1–lysine 29 is disordered. Residues alanine 19–lysine 29 show a composition bias toward polar residues.

Belongs to the bacterial ribosomal protein bS20 family.

In terms of biological role, binds directly to 16S ribosomal RNA. The polypeptide is Small ribosomal subunit protein bS20 (Bdellovibrio bacteriovorus (strain ATCC 15356 / DSM 50701 / NCIMB 9529 / HD100)).